The primary structure comprises 364 residues: Tyrosine-protein phosphatase YVH1 (364 aa).

The region spanning 11 to 173 (EVTRILGGIY…LHLFEKMGGD (163 aa)) is the Tyrosine-protein phosphatase domain. Residue C117 is the Phosphocysteine intermediate of the active site. Residue S196 is modified to Phosphoserine.

Belongs to the protein-tyrosine phosphatase family. Non-receptor class dual specificity subfamily.

The catalysed reaction is O-phospho-L-tyrosyl-[protein] + H2O = L-tyrosyl-[protein] + phosphate. May be directly involved in signal transduction and/or cell cycle regulation. It is necessary for maintaining growth rate or spore germination. Could show both activity toward tyrosine-protein phosphate as well as with serine-protein phosphate. This Saccharomyces cerevisiae (strain ATCC 204508 / S288c) (Baker's yeast) protein is Tyrosine-protein phosphatase YVH1 (YVH1).